The sequence spans 132 residues: Fatty acid-binding protein (132 aa).

(5Z,8Z,11Z,14Z)-eicosatetraenoate-binding positions include arginine 107 and 127-129 (RNY). (9Z)-octadecenoate contacts are provided by residues arginine 107 and 127–129 (RNY).

Belongs to the calycin superfamily. Fatty-acid binding protein (FABP) family.

The protein resides in the cytoplasm. In terms of biological role, may play a role in the transport of fatty acids. Binds to various fatty acids but not retinoids. This is Fatty acid-binding protein from Schistosoma japonicum (Blood fluke).